A 185-amino-acid chain; its full sequence is Inner membrane-spanning protein YciB (185 aa).

5 consecutive transmembrane segments (helical) span residues 19–39 (IHGI…LMAW), 49–69 (TMTW…LYFH), 72–92 (TFIK…LLFT), 122–142 (GYWI…AYAF), and 150–170 (FKLF…AVVI).

This sequence belongs to the YciB family.

Its subcellular location is the cell inner membrane. Functionally, plays a role in cell envelope biogenesis, maintenance of cell envelope integrity and membrane homeostasis. In Acidithiobacillus ferrooxidans (strain ATCC 23270 / DSM 14882 / CIP 104768 / NCIMB 8455) (Ferrobacillus ferrooxidans (strain ATCC 23270)), this protein is Inner membrane-spanning protein YciB.